Consider the following 543-residue polypeptide: Pectate disaccharide-lyase (543 aa).

This sequence belongs to the polysaccharide lyase 2 family. Cu cation is required as a cofactor. It depends on Mn(2+) as a cofactor. Ni(2+) serves as cofactor.

It localises to the cytoplasm. The enzyme catalyses [(1-&gt;4)-alpha-D-galacturonosyl](n) = 4-(4-deoxy-alpha-D-galact-4-enuronosyl)-D-galacturonate + [(1-&gt;4)-alpha-D-galacturonosyl](n-2). It participates in glycan metabolism; pectin degradation. Catalyzes the formation of unsaturated digalacturonates from polygalacturonate or short oligogalacturonates. The polypeptide is Pectate disaccharide-lyase (pelW) (Dickeya dadantii (strain 3937) (Erwinia chrysanthemi (strain 3937))).